Here is a 1361-residue protein sequence, read N- to C-terminus: DNA-directed RNA polymerase subunit beta' (1361 aa).

Positions 69, 71, 84, and 87 each coordinate Zn(2+). Asp460, Asp462, and Asp464 together coordinate Mg(2+). Zn(2+) contacts are provided by Cys808, Cys882, Cys889, and Cys892.

This sequence belongs to the RNA polymerase beta' chain family. The RNAP catalytic core consists of 2 alpha, 1 beta, 1 beta' and 1 omega subunit. When a sigma factor is associated with the core the holoenzyme is formed, which can initiate transcription. The cofactor is Mg(2+). Zn(2+) is required as a cofactor.

It carries out the reaction RNA(n) + a ribonucleoside 5'-triphosphate = RNA(n+1) + diphosphate. Functionally, DNA-dependent RNA polymerase catalyzes the transcription of DNA into RNA using the four ribonucleoside triphosphates as substrates. The polypeptide is DNA-directed RNA polymerase subunit beta' (Rickettsia bellii (strain RML369-C)).